Consider the following 166-residue polypeptide: Mitochondrial fission process protein 1 (166 aa).

2 helical membrane passes run 34–54 (SLVPAAVVWLSYGVASSYVLA) and 80–100 (AVVDTFVWQALASVAIPGFTI). At lysine 123 the chain carries N6-succinyllysine. A helical transmembrane segment spans residues 129 to 149 (LGLLTIPIIIHPIDRSVDFLL).

The protein belongs to the MTFP1 family.

The protein resides in the mitochondrion inner membrane. Involved in the mitochondrial division probably by regulating membrane fission. Loss-of-function induces the release of cytochrome c, which activates the caspase cascade and leads to apoptosis. The sequence is that of Mitochondrial fission process protein 1 (MTFP1) from Homo sapiens (Human).